The following is a 415-amino-acid chain: MLTEINFDGIIGPTHNYAGLSRGNIASASHAGDVSQPRAAALQGIDKMRHNLVLGLPQGFFVPLDRPDAPWLAALGTSVEKAEGHLRAQAWSASSMWAANAATVSPAPDSADGKCHLTVANLVTMPHRSHEWPGTLAQLRLAFAHPAFSVHPPVPAPFGDEGAANHMRLCSGHDRVGVEIFVYGVAGGRFPARQHLDASKAIARRHRLDPARTLFIRQSDTAIQGGAFHNDVVAVANEHVLFTHETAFEDREAAHAEIRAAFPAVEIVEVPASAVSLAHAIKSYLFNAQLVTLPEGGMGLVLPTEAHETPAVWNWLEAMIVGNGPIRRLFPVDVRQSMANGGGPACLRLRVVADPATVDPRFLADEAKLDRIAGVVAKHWPEAIAPADLASTTLLHDVRRARLALLDALDLSELG.

Substrate contacts are provided by residues alanine 18 to serine 27, asparagine 100, and histidine 127 to arginine 128. Glutamate 161 is a catalytic residue. Arginine 193 provides a ligand contact to substrate. Histidine 229 is a catalytic residue. Substrate contacts are provided by aspartate 231 and asparagine 340. Cysteine 346 (nucleophile) is an active-site residue.

Belongs to the succinylarginine dihydrolase family. Homodimer.

The enzyme catalyses N(2)-succinyl-L-arginine + 2 H2O + 2 H(+) = N(2)-succinyl-L-ornithine + 2 NH4(+) + CO2. It functions in the pathway amino-acid degradation; L-arginine degradation via AST pathway; L-glutamate and succinate from L-arginine: step 2/5. Functionally, catalyzes the hydrolysis of N(2)-succinylarginine into N(2)-succinylornithine, ammonia and CO(2). This Sphingopyxis alaskensis (strain DSM 13593 / LMG 18877 / RB2256) (Sphingomonas alaskensis) protein is N-succinylarginine dihydrolase.